A 557-amino-acid chain; its full sequence is Formate--tetrahydrofolate ligase 2 (557 aa).

An ATP-binding site is contributed by 66 to 73 (TPAGEGKT).

This sequence belongs to the formate--tetrahydrofolate ligase family.

It catalyses the reaction (6S)-5,6,7,8-tetrahydrofolate + formate + ATP = (6R)-10-formyltetrahydrofolate + ADP + phosphate. It functions in the pathway one-carbon metabolism; tetrahydrofolate interconversion. The chain is Formate--tetrahydrofolate ligase 2 from Streptococcus pyogenes serotype M5 (strain Manfredo).